Reading from the N-terminus, the 32-residue chain is MSDIN-like toxin proprotein 1 (32 aa).

Residues 1 to 10 (MSDINVTRLP) constitute a propeptide that is removed on maturation. Positions 11 to 18 (GFVPILFP) form a cross-link, cyclopeptide (Gly-Pro). A propeptide spanning residues 19 to 32 (CVGDDVNTALTRGE) is cleaved from the precursor.

This sequence belongs to the MSDIN fungal toxin family. In terms of processing, processed by the macrocyclase-peptidase enzyme POPB to yield a toxic cyclic octapeptide. POPB first removes 10 residues from the N-terminus. Conformational trapping of the remaining peptide forces the enzyme to release this intermediate rather than proceed to macrocyclization. The enzyme rebinds the remaining peptide in a different conformation and catalyzes macrocyclization of the N-terminal 8 residues.

Functionally, probable toxin that belongs to the MSDIN-like toxin family responsible for a large number of food poisoning cases and deaths. The chain is MSDIN-like toxin proprotein 1 from Amanita bisporigera (Destroying angel).